The sequence spans 209 residues: Nascent polypeptide-associated complex subunit alpha-like protein 5 (209 aa).

The interval 23-71 (EKEDDVVVEDVKDGEEEDDDEDDEDVEVEGEGGNENAKQSRSEKKSRKA) is disordered. Positions 25–54 (EDDVVVEDVKDGEEEDDDEDDEDVEVEGEG) are enriched in acidic residues. The NAC-A/B domain occupies 62-127 (SRSEKKSRKA…AKVDDLSSQL (66 aa)). The UBA domain occupies 170 to 207 (VEARDIDLVMTQAGVSKAKAVSALKANDGDIVSAIMEL).

It belongs to the NAC-alpha family.

May promote appropriate targeting of ribosome-nascent polypeptide complexes. The sequence is that of Nascent polypeptide-associated complex subunit alpha-like protein 5 from Arabidopsis thaliana (Mouse-ear cress).